The sequence spans 358 residues: Probable BOI-related E3 ubiquitin-protein ligase 2 (358 aa).

Residues 171-234 (KYEIEEKRKR…NQIWRDLAQT (64 aa)) are a coiled coil. The segment at 214–250 (LEERVKSLSIENQIWRDLAQTNEATANHLRTNLEHVL) is WRD domain. An RING-type zinc finger spans residues 310–345 (CRNCGEEESCVLLLPCRHLCLCGVCGSSVHTCPICT).

Interacts with the DELLA proteins GAI, RGA, RGL1, RGL2 and RGL3.

It catalyses the reaction S-ubiquitinyl-[E2 ubiquitin-conjugating enzyme]-L-cysteine + [acceptor protein]-L-lysine = [E2 ubiquitin-conjugating enzyme]-L-cysteine + N(6)-ubiquitinyl-[acceptor protein]-L-lysine.. Its pathway is protein degradation; proteasomal ubiquitin-dependent pathway. Its function is as follows. Probable E3 ubiquitin-protein ligase. Has no effect on the stability of the DELLA proteins. The protein is Probable BOI-related E3 ubiquitin-protein ligase 2 (BRG2) of Arabidopsis thaliana (Mouse-ear cress).